Here is a 418-residue protein sequence, read N- to C-terminus: MEIKEQVVFQARKASKASRKLSGIATDVKNKALAAIAEKLVQAKDEIIRANNIDMERGREKGLSKALLDRLELNEKRIEGMAEGLKELVKLEDPVGEVIKMWKRPNGLQIGQMRVPLGVIGMIYEARPNVTVDAAGLCLKTGNAVILRGGSEAINSNKILARIIEDTAVAAGLPEGCVQLIQTTDRKAVKVLFNLTEYLDVLIPRGGAGLINRVIAEAKVPVIQTGVGNCHVYVDSEADLDMALDIVFNAKTSRPAVCNAAESLLVHRQVADEFLPELYKLFRENNVELRGCENTRAILPGIKKAVDDDWSREYLDYIMAVKIVDSFDKAVEHINTYGTKHSEAIITENYTRAHRFLQEIDAAAVYVNASTRFTDGGQFGLGAEIGISTQKLHARGPMGLEELTTTKYIIFGQGQIRE.

The protein belongs to the gamma-glutamyl phosphate reductase family.

The protein resides in the cytoplasm. It carries out the reaction L-glutamate 5-semialdehyde + phosphate + NADP(+) = L-glutamyl 5-phosphate + NADPH + H(+). It participates in amino-acid biosynthesis; L-proline biosynthesis; L-glutamate 5-semialdehyde from L-glutamate: step 2/2. Functionally, catalyzes the NADPH-dependent reduction of L-glutamate 5-phosphate into L-glutamate 5-semialdehyde and phosphate. The product spontaneously undergoes cyclization to form 1-pyrroline-5-carboxylate. This is Gamma-glutamyl phosphate reductase from Halothermothrix orenii (strain H 168 / OCM 544 / DSM 9562).